Reading from the N-terminus, the 62-residue chain is Protein DsrB (62 aa).

It belongs to the DsrB family.

This is Protein DsrB from Citrobacter koseri (strain ATCC BAA-895 / CDC 4225-83 / SGSC4696).